The following is a 669-amino-acid chain: Cell surface receptor daf-1 (669 aa).

Residues 1-19 form the signal peptide; that stretch reads MRIRHVVFCLLALVYGAET. At 20-170 the chain is on the extracellular side; that stretch reads SDDDLDERTN…APGPQQSSTW (151 aa). N-linked (GlcNAc...) asparagine glycosylation is found at Asn-49, Asn-79, Asn-133, and Asn-154. A helical transmembrane segment spans residues 171 to 191; it reads LILTILALLTFIVLLGIAIFL. The Cytoplasmic portion of the chain corresponds to 192–669; it reads TRKSWEAKFD…NDDSSRPLLG (478 aa). One can recognise a GS domain in the interval 262-292; that stretch reads NNMKDMLDVLEETSGSGMGPTTLHKLTIGGQ. Residues 293–593 form the Protein kinase domain; it reads IRLTGRVGSG…KRMDERQQLL (301 aa). Residues 299-307 and Lys-320 contribute to the ATP site; that span reads VGSGRFGNV. The active-site Proton acceptor is Asp-423. Composition is skewed to basic and acidic residues over residues 611–624 and 633–650; these read DRKI…KDES and VQKE…RETA. The segment at 611-669 is disordered; the sequence is DRKILGPQKPKDESPANGAPRIVQKEIDREDEQENWRETAKTPNGHISSNDDSSRPLLG. Polar residues predominate over residues 651–661; sequence KTPNGHISSND.

The protein belongs to the protein kinase superfamily. TKL Ser/Thr protein kinase family. TGFB receptor subfamily. As to quaternary structure, may interact with daf-4 to regulate dauer larva development. Head and ventral nerve cord from embryos to adults. Expressed in many sensory neurons. Subset of head neurons show coexpression with daf-4 when dauer/nondauer decision is made. Also expressed in non-neuronal cells: membraneous sheath surrounding the distal end of the intestine and in the distal tip cell of the gonad.

It is found in the membrane. It carries out the reaction L-threonyl-[receptor-protein] + ATP = O-phospho-L-threonyl-[receptor-protein] + ADP + H(+). It catalyses the reaction L-seryl-[receptor-protein] + ATP = O-phospho-L-seryl-[receptor-protein] + ADP + H(+). In terms of biological role, probably involved in a TGF-beta pathway. May be a receptor for TGF-beta-like ligand daf-7. Controls the decision of whether or not larvae enter a developmentally arrested state, known as dauer, in response to environmental conditions. Involved in regulating entry into quiescence triggered by satiety. Involved in sensitivity to CO2 levels. In AWC neurons, acts to promote expression of srsx-3, a member of the GPCR family. This Caenorhabditis elegans protein is Cell surface receptor daf-1 (daf-1).